The sequence spans 360 residues: Peptide chain release factor 1 (360 aa).

Position 235 is an N5-methylglutamine (Gln-235). Positions 284–313 are disordered; sequence AKRQQAEASTRRNLLGSGDRSDRNRTYNFP.

The protein belongs to the prokaryotic/mitochondrial release factor family. In terms of processing, methylated by PrmC. Methylation increases the termination efficiency of RF1.

It localises to the cytoplasm. In terms of biological role, peptide chain release factor 1 directs the termination of translation in response to the peptide chain termination codons UAG and UAA. This is Peptide chain release factor 1 from Escherichia coli (strain UTI89 / UPEC).